The sequence spans 161 residues: GTP-dependent dephospho-CoA kinase (161 aa).

Positions 40, 41, 42, 59, 112, and 135 each coordinate GTP.

This sequence belongs to the GTP-dependent DPCK family.

It catalyses the reaction 3'-dephospho-CoA + GTP = GDP + CoA + H(+). It functions in the pathway cofactor biosynthesis; coenzyme A biosynthesis. Functionally, catalyzes the GTP-dependent phosphorylation of the 3'-hydroxyl group of dephosphocoenzyme A to form coenzyme A (CoA). The chain is GTP-dependent dephospho-CoA kinase from Methanocorpusculum labreanum (strain ATCC 43576 / DSM 4855 / Z).